A 357-amino-acid polypeptide reads, in one-letter code: UPF0744 protein C106.03 (357 aa).

A Phosphoserine modification is found at Ser282.

It belongs to the UPF0744 family.

It localises to the cytoplasm. This chain is UPF0744 protein C106.03, found in Schizosaccharomyces pombe (strain 972 / ATCC 24843) (Fission yeast).